The primary structure comprises 263 residues: Endonuclease 8 (263 aa).

The Schiff-base intermediate with DNA role is filled by Pro2. Glu3 functions as the Proton donor in the catalytic mechanism. Residue Lys53 is the Proton donor; for beta-elimination activity of the active site. DNA contacts are provided by Gln70, Arg125, and Asn169. The FPG-type zinc-finger motif lies at 229 to 263 (KVFHREGESCERCGGTIERTMLSSRPFYWCPHCQS). Catalysis depends on Arg253, which acts as the Proton donor; for delta-elimination activity.

The protein belongs to the FPG family. Zn(2+) is required as a cofactor.

The catalysed reaction is 2'-deoxyribonucleotide-(2'-deoxyribose 5'-phosphate)-2'-deoxyribonucleotide-DNA = a 3'-end 2'-deoxyribonucleotide-(2,3-dehydro-2,3-deoxyribose 5'-phosphate)-DNA + a 5'-end 5'-phospho-2'-deoxyribonucleoside-DNA + H(+). Its function is as follows. Involved in base excision repair of DNA damaged by oxidation or by mutagenic agents. Acts as a DNA glycosylase that recognizes and removes damaged bases. Has a preference for oxidized pyrimidines, such as thymine glycol, 5,6-dihydrouracil and 5,6-dihydrothymine. Has AP (apurinic/apyrimidinic) lyase activity and introduces nicks in the DNA strand. Cleaves the DNA backbone by beta-delta elimination to generate a single-strand break at the site of the removed base with both 3'- and 5'-phosphates. The chain is Endonuclease 8 from Pectobacterium atrosepticum (strain SCRI 1043 / ATCC BAA-672) (Erwinia carotovora subsp. atroseptica).